Here is a 298-residue protein sequence, read N- to C-terminus: Junctional adhesion molecule A (298 aa).

The first 28 residues, 1-28 (MGTEARAGRRQLLVFTSVVLSSLALGRG), serve as a signal peptide directing secretion. Ig-like V-type domains are found at residues 29–126 (AVYT…VQLT) and 134–227 (PTVH…EAVR). Residues 29 to 237 (AVYTSEPDVR…MEAAELNVGG (209 aa)) lie on the Extracellular side of the membrane. 2 disulfides stabilise this stretch: Cys-49-Cys-108 and Cys-152-Cys-211. Residue Asn-184 is glycosylated (N-linked (GlcNAc...) asparagine). A helical transmembrane segment spans residues 238 to 258 (IVAAVLVTLILLGFLILGIWF). The Cytoplasmic segment spans residues 259 to 298 (AYRRGYFDRTKKGTSSKKVIYSQPAARSEGEFRQTSSFLV). Phosphoserine occurs at positions 280 and 286.

It belongs to the immunoglobulin superfamily. Interacts with the ninth PDZ domain of MPDZ. Interacts with the first PDZ domain of PARD3. The association between PARD3 and PARD6B probably disrupts this interaction. Interacts with ITGAL (via I-domain). Interacts with CD151. As to quaternary structure, (Microbial infection) Interacts with calicivirus capsid protein. In terms of assembly, (Microbial infection) Interacts with the orthoreovirus sigma-1 capsid protein.

The protein resides in the cell junction. Its subcellular location is the tight junction. It localises to the cell membrane. In terms of biological role, seems to play a role in epithelial tight junction formation. Appears early in primordial forms of cell junctions and recruits PARD3. The association of the PARD6-PARD3 complex may prevent the interaction of PARD3 with JAM1, thereby preventing tight junction assembly. Plays a role in regulating monocyte transmigration involved in integrity of epithelial barrier. Ligand for integrin alpha-L/beta-2 involved in memory T-cell and neutrophil transmigration. Involved in platelet activation. (Microbial infection) Acts as a functional receptor for murine norovirus. Its function is as follows. (Microbial infection) In case of orthoreovirus infection, serves as receptor for the virus. In Felis catus (Cat), this protein is Junctional adhesion molecule A (F11R).